Reading from the N-terminus, the 419-residue chain is Mitochondrial chaperone BCS1 (419 aa).

Over 2–15 the chain is Mitochondrial intermembrane; that stretch reads PLSDFILALKDNPY. Residues 16-32 form a helical membrane-spanning segment; sequence FGAGFGLVGVGTALALA. The Mitochondrial matrix portion of the chain corresponds to 33-419; sequence RKGVQLGLVA…AIHNAESLRR (387 aa). A Phosphotyrosine modification is found at Y181. 230-237 is a binding site for ATP; the sequence is GPPGCGKS.

This sequence belongs to the AAA ATPase family. BCS1 subfamily. Interacts with LETM1. In terms of tissue distribution, ubiquitous.

The protein resides in the mitochondrion inner membrane. It catalyses the reaction ATP + H2O = ADP + phosphate + H(+). In terms of biological role, chaperone necessary for the incorporation of Rieske iron-sulfur protein UQCRFS1 into the mitochondrial respiratory chain complex III. Plays an important role in the maintenance of mitochondrial tubular networks, respiratory chain assembly and formation of the LETM1 complex. The protein is Mitochondrial chaperone BCS1 (BCS1L) of Homo sapiens (Human).